Here is a 252-residue protein sequence, read N- to C-terminus: Imidazole glycerol phosphate synthase subunit HisF (252 aa).

Residues D11 and D130 contribute to the active site.

This sequence belongs to the HisA/HisF family. As to quaternary structure, heterodimer of HisH and HisF.

It is found in the cytoplasm. The enzyme catalyses 5-[(5-phospho-1-deoxy-D-ribulos-1-ylimino)methylamino]-1-(5-phospho-beta-D-ribosyl)imidazole-4-carboxamide + L-glutamine = D-erythro-1-(imidazol-4-yl)glycerol 3-phosphate + 5-amino-1-(5-phospho-beta-D-ribosyl)imidazole-4-carboxamide + L-glutamate + H(+). It functions in the pathway amino-acid biosynthesis; L-histidine biosynthesis; L-histidine from 5-phospho-alpha-D-ribose 1-diphosphate: step 5/9. In terms of biological role, IGPS catalyzes the conversion of PRFAR and glutamine to IGP, AICAR and glutamate. The HisF subunit catalyzes the cyclization activity that produces IGP and AICAR from PRFAR using the ammonia provided by the HisH subunit. The protein is Imidazole glycerol phosphate synthase subunit HisF of Staphylococcus epidermidis (strain ATCC 12228 / FDA PCI 1200).